An 84-amino-acid chain; its full sequence is UPF0457 protein BT9727_2307 (84 aa).

This sequence belongs to the UPF0457 family.

In Bacillus thuringiensis subsp. konkukian (strain 97-27), this protein is UPF0457 protein BT9727_2307.